The primary structure comprises 422 residues: Alcohol dehydrogenase 4 (422 aa).

The N-terminal 29 residues, 1-29 (MSILRSPFRLIRSPARFFPSLFHSSCNQS), are a transit peptide targeting the mitochondrion. Aspartate 82, asparagine 114, glycine 141, serine 142, threonine 181, threonine 182, threonine 190, phenylalanine 192, lysine 203, and glycine 225 together coordinate NAD(+). Fe(2+) contacts are provided by aspartate 237, histidine 241, and histidine 306. Positions 310 and 320 each coordinate NAD(+). Residue histidine 320 coordinates Fe(2+).

The protein belongs to the iron-containing alcohol dehydrogenase family. Zn(2+) is required as a cofactor.

Its subcellular location is the mitochondrion matrix. The enzyme catalyses a primary alcohol + NAD(+) = an aldehyde + NADH + H(+). The catalysed reaction is a secondary alcohol + NAD(+) = a ketone + NADH + H(+). It catalyses the reaction ethanol + NAD(+) = acetaldehyde + NADH + H(+). Involved in ethanol oxidation in mitochondria. The sequence is that of Alcohol dehydrogenase 4 (adh4) from Schizosaccharomyces pombe (strain 972 / ATCC 24843) (Fission yeast).